A 301-amino-acid chain; its full sequence is Probable alpha-L-glutamate ligase (301 aa).

Positions 104-287 (MQLLSRKGIG…VAGLIVDFIE (184 aa)) constitute an ATP-grasp domain. ATP-binding positions include lysine 141, 178–179 (EF), aspartate 187, and 211–213 (RSN). The Mg(2+) site is built by aspartate 248, glutamate 260, and asparagine 262. Mn(2+) contacts are provided by aspartate 248, glutamate 260, and asparagine 262.

Belongs to the RimK family. Mg(2+) serves as cofactor. It depends on Mn(2+) as a cofactor.

The protein is Probable alpha-L-glutamate ligase of Aliivibrio salmonicida (strain LFI1238) (Vibrio salmonicida (strain LFI1238)).